The sequence spans 249 residues: Pyridoxamine 5'-phosphate oxidase family protein ustO (249 aa).

21 to 24 (LFFV) contacts substrate. Residues 76–81 (ATVMFC), 91–92 (RL), R105, and 163–164 (RL) contribute to the FMN site. 215–217 (ASY) is a substrate binding site. Residues 227–247 (TGMALMFLVMVVAQWVGYVLY) form a helical membrane-spanning segment.

The protein belongs to the pyridoxamine 5'-phosphate oxidase family. FMN serves as cofactor.

It localises to the membrane. Its pathway is mycotoxin biosynthesis. Pyridoxamine 5'-phosphate oxidase family protein; part of the gene cluster that mediates the biosynthesis of the secondary metabolite ustiloxin B, an antimitotic tetrapeptide. First, ustA is processed by the subtilisin-like endoprotease Kex2 that is outside the ustiloxin B gene cluster, at the C-terminal side of Arg-Lys, after transfer to Golgi apparatus through the endoplasmic reticulum (ER). Cleavage by KEX2 generates 16 peptides YAIG-I to YAIG-XVI. To process the precursor peptide further, at least two peptidases are necessary to cleave the N-terminal and C-terminal sides of the Tyr-Ala-Ile-Gly core peptide which serves as backbone for the synthesis of ustiloxin B, through cyclization and modification of the tyrosine with a non-protein coding amino acid, norvaline. One of the two peptidases must be the serine peptidase ustP; and the other pepdidase is probably ustH. Macrocyclization of the core peptide derived from ustA requires the tyrosinase ustQ, as well as the homologous oxidases ustYa and ustYb, and leads to the production of the first cyclization product N-desmethylustiloxin F. For the formation of N-desmethylustiloxin F, three oxidation steps are required, hydroxylation at the benzylic position, hydroxylation at either the aromatic ring of Tyr or beta-position of Ile, and oxidative cyclization. UstQ may catalyze the oxidation of a phenol moiety, whereas the ustYa and ustYb are most likely responsible for the remaining two-step oxidations. N-desmethylustiloxin F is then methylated by ustM to yield ustiloxin F which in turn substrate of the cytochrome P450 monooxygenase ustC which catalyzes the formation of S-deoxyustiloxin H. The flavoprotein monooxygenases ustF1 and ustF2 then participate in the modification of the side chain of S-deoxyustiloxin H, leading to the synthesis of an oxime intermediate, via ustiloxin H. Finally, carboxylative dehydration performed by the cysteine desulfurase-like protein ustD yields ustiloxin B. This chain is Pyridoxamine 5'-phosphate oxidase family protein ustO, found in Aspergillus flavus (strain ATCC 200026 / FGSC A1120 / IAM 13836 / NRRL 3357 / JCM 12722 / SRRC 167).